We begin with the raw amino-acid sequence, 195 residues long: Probable GTP-binding protein EngB (195 aa).

Residues 22 to 194 form the EngB-type G domain; sequence LKGEVAFVGR…LDLISTLLKE (173 aa). Residues 30 to 37, 56 to 60, 74 to 77, 141 to 144, and 173 to 175 contribute to the GTP site; these read GRSNVGKS, GKTRS, DLPG, TKMD, and TSS. 2 residues coordinate Mg(2+): serine 37 and threonine 58.

The protein belongs to the TRAFAC class TrmE-Era-EngA-EngB-Septin-like GTPase superfamily. EngB GTPase family. It depends on Mg(2+) as a cofactor.

In terms of biological role, necessary for normal cell division and for the maintenance of normal septation. The protein is Probable GTP-binding protein EngB of Thermotoga maritima (strain ATCC 43589 / DSM 3109 / JCM 10099 / NBRC 100826 / MSB8).